Consider the following 380-residue polypeptide: Queuine tRNA-ribosyltransferase (380 aa).

Asp-96 functions as the Proton acceptor in the catalytic mechanism. Substrate is bound by residues 96 to 100 (DSGGF), Asp-150, Gln-193, and Gly-220. Positions 251 to 257 (GVGAPDS) are RNA binding. Asp-270 (nucleophile) is an active-site residue. Residues 275–279 (TRIAR) form an RNA binding; important for wobble base 34 recognition region. 4 residues coordinate Zn(2+): Cys-308, Cys-310, Cys-313, and His-339.

Belongs to the queuine tRNA-ribosyltransferase family. Homodimer. Within each dimer, one monomer is responsible for RNA recognition and catalysis, while the other monomer binds to the replacement base PreQ1. Zn(2+) serves as cofactor.

It carries out the reaction 7-aminomethyl-7-carbaguanine + guanosine(34) in tRNA = 7-aminomethyl-7-carbaguanosine(34) in tRNA + guanine. Its pathway is tRNA modification; tRNA-queuosine biosynthesis. In terms of biological role, catalyzes the base-exchange of a guanine (G) residue with the queuine precursor 7-aminomethyl-7-deazaguanine (PreQ1) at position 34 (anticodon wobble position) in tRNAs with GU(N) anticodons (tRNA-Asp, -Asn, -His and -Tyr). Catalysis occurs through a double-displacement mechanism. The nucleophile active site attacks the C1' of nucleotide 34 to detach the guanine base from the RNA, forming a covalent enzyme-RNA intermediate. The proton acceptor active site deprotonates the incoming PreQ1, allowing a nucleophilic attack on the C1' of the ribose to form the product. After dissociation, two additional enzymatic reactions on the tRNA convert PreQ1 to queuine (Q), resulting in the hypermodified nucleoside queuosine (7-(((4,5-cis-dihydroxy-2-cyclopenten-1-yl)amino)methyl)-7-deazaguanosine). This Streptococcus agalactiae serotype Ia (strain ATCC 27591 / A909 / CDC SS700) protein is Queuine tRNA-ribosyltransferase.